The sequence spans 127 residues: uncharacterized protein (127 aa).

The HTH asnC-type domain maps to 1 to 46 (MEVGLSPSACLRRIKLMEQAGVIRGYTALVDPTQSESTIAVIINIT).

Not known, symbiotically active. This is an uncharacterized protein from Sinorhizobium fredii (strain NBRC 101917 / NGR234).